The sequence spans 227 residues: Ribonuclease 3 (227 aa).

In terms of domain architecture, RNase III spans 4 to 126 (LDRLERKIGY…IIGAMSLDQG (123 aa)). Glutamate 39 contacts Mg(2+). Residue aspartate 43 is part of the active site. Residues aspartate 112 and glutamate 115 each contribute to the Mg(2+) site. Glutamate 115 is an active-site residue. The DRBM domain maps to 153-226 (DAKTRLQEYL…AEQILKELDI (74 aa)).

This sequence belongs to the ribonuclease III family. In terms of assembly, homodimer. The cofactor is Mg(2+).

It localises to the cytoplasm. It carries out the reaction Endonucleolytic cleavage to 5'-phosphomonoester.. In terms of biological role, digests double-stranded RNA. Involved in the processing of primary rRNA transcript to yield the immediate precursors to the large and small rRNAs (23S and 16S). Processes some mRNAs, and tRNAs when they are encoded in the rRNA operon. Processes pre-crRNA and tracrRNA of type II CRISPR loci if present in the organism. The protein is Ribonuclease 3 of Haemophilus influenzae (strain 86-028NP).